A 329-amino-acid polypeptide reads, in one-letter code: Bifunctional muramidase/DL-endopeptidase CwlT (329 aa).

Positions 1-29 (MISKKVVLPLVFSAPFIFFFVLCIVVVMT) are cleaved as a signal peptide. The segment at 59–192 (RFRAVFEKYA…SYVDHVMRYV (134 aa)) is muramidase. One can recognise a NlpC/P60 domain in the interval 206-329 (MDFYETVMKE…DHLVSFGRIK (124 aa)). Catalysis depends on Cys237, which acts as the Nucleophile. Catalysis depends on His290, which acts as the Proton acceptor. Residue Asn302 is part of the active site.

It belongs to the peptidase C40 family.

The protein localises to the secreted. The catalysed reaction is Hydrolysis of (1-&gt;4)-beta-linkages between N-acetylmuramic acid and N-acetyl-D-glucosamine residues in a peptidoglycan and between N-acetyl-D-glucosamine residues in chitodextrins.. Its function is as follows. Exhibits both muramidase and DL-endopeptidase activities. The N-terminal region acts as a N-acetylmuramidase, which cleaves the bond between N-acetylmuramic acid and N-acetyl-D-glucosamine (MurNAc-GlcNAc) in peptidoglycan. The C-terminal region acts as a DL-endopeptidase that cleaves the bond between D-gamma-glutamate and meso-diaminopimelic acid. Cannot degrade purified B.anthracis peptidoglycan, which differ from those of B.subtilis. CwlT is required for ICEBs1 conjugation: the muramidase activity is essential, whereas the peptidase activity is partially dispensable for transfer of ICEBs1. The sequence is that of Bifunctional muramidase/DL-endopeptidase CwlT from Bacillus subtilis (strain 168).